Reading from the N-terminus, the 108-residue chain is Thiosulfate sulfurtransferase GlpE (108 aa).

Residues 17–105 form the Rhodanese domain; sequence QEKEAVLVDI…WQRQFPAEVA (89 aa). The active-site Cysteine persulfide intermediate is cysteine 65.

This sequence belongs to the GlpE family.

It is found in the cytoplasm. The catalysed reaction is thiosulfate + hydrogen cyanide = thiocyanate + sulfite + 2 H(+). It catalyses the reaction thiosulfate + [thioredoxin]-dithiol = [thioredoxin]-disulfide + hydrogen sulfide + sulfite + 2 H(+). Functionally, transferase that catalyzes the transfer of sulfur from thiosulfate to thiophilic acceptors such as cyanide or dithiols. May function in a CysM-independent thiosulfate assimilation pathway by catalyzing the conversion of thiosulfate to sulfite, which can then be used for L-cysteine biosynthesis. The polypeptide is Thiosulfate sulfurtransferase GlpE (Escherichia coli O127:H6 (strain E2348/69 / EPEC)).